The primary structure comprises 113 residues: Large ribosomal subunit protein uL22 (113 aa).

This sequence belongs to the universal ribosomal protein uL22 family. In terms of assembly, part of the 50S ribosomal subunit.

Functionally, this protein binds specifically to 23S rRNA; its binding is stimulated by other ribosomal proteins, e.g. L4, L17, and L20. It is important during the early stages of 50S assembly. It makes multiple contacts with different domains of the 23S rRNA in the assembled 50S subunit and ribosome. The globular domain of the protein is located near the polypeptide exit tunnel on the outside of the subunit, while an extended beta-hairpin is found that lines the wall of the exit tunnel in the center of the 70S ribosome. The sequence is that of Large ribosomal subunit protein uL22 from Halothermothrix orenii (strain H 168 / OCM 544 / DSM 9562).